We begin with the raw amino-acid sequence, 510 residues long: F-box only protein 15 (510 aa).

One can recognise an F-box domain in the interval 77–117 (MPSEILLKIFSYLDAVSLLCTGCVSRRFYHLANDNFIWIGI).

As to quaternary structure, directly interacts with SKP1 and CUL1.

In terms of biological role, substrate-recognition component of the SCF (SKP1-CUL1-F-box protein)-type E3 ubiquitin ligase complex. The protein is F-box only protein 15 (FBXO15) of Homo sapiens (Human).